A 513-amino-acid polypeptide reads, in one-letter code: Voltage-gated potassium channel regulatory subunit KCNG1 (513 aa).

At 1–224 (MTLLPGDNSD…DMVERPHSGL (224 aa)) the chain is on the cytoplasmic side. Residues 184–204 (EEDDALDSEGRDSEGPAEGEG) are disordered. Basic and acidic residues predominate over residues 191–204 (SEGRDSEGPAEGEG). Residues 225–246 (PGKVFACLSVLFVTVTAVNLSV) form a helical membrane-spanning segment. Residues 247–267 (STLPSLREEEEQGHCSQMCHN) lie on the Extracellular side of the membrane. Residues 268-289 (VFIVESVCVGWFSLEFLLRLIQ) traverse the membrane as a helical segment. At 290–300 (APSKFAFLRSP) the chain is on the cytoplasmic side. A helical membrane pass occupies residues 301–321 (LTLIDLVAILPYYITLLVDGA). Residues 322–338 (AAGRRKPGAGNSYLDKV) lie on the Extracellular side of the membrane. A helical; Voltage-sensor membrane pass occupies residues 339–359 (GLVLRVLRALRILYVMRLARH). The Cytoplasmic portion of the chain corresponds to 360–374 (SLGLQTLGLTARRCT). The chain crosses the membrane as a helical span at residues 375–396 (REFGLLLLFLCVAIALFAPLLY). Residues 397 to 411 (VIENEMADSPEFTSI) lie on the Extracellular side of the membrane. The helical intramembrane region spans 412–423 (PACYWWAVITMT). Residues 424–429 (TVGYGD) carry the Selectivity filter motif. Residues 424–431 (TVGYGDMV) lie within the membrane without spanning it. Topologically, residues 432–438 (PRSTPGQ) are extracellular. Residues 439–467 (VVALSSILSGILLMAFPVTSIFHTFSRSY) form a helical membrane-spanning segment. Over 468–513 (LELKQEQERVMFRRAQFLIKTKSQLSVSQDSDILFGSASSDTRDNN) the chain is Cytoplasmic.

The protein belongs to the potassium channel family. G (TC 1.A.1.2) subfamily. Kv6.1/KCNG1 sub-subfamily. As to quaternary structure, heterotetramer with KCNB1. Heterotetramer with KCNB2. As to expression, expressed in brain and placenta, and at much lower levels in kidney and pancreas.

The protein localises to the cell membrane. Functionally, regulatory alpha-subunit of the voltage-gated potassium (Kv) channel which, when coassembled with KCNB1 or KCNB2, can modulate their expression and their gating kinetics by acting on deactivation upon repolarization and inactivation during maintained depolarization. Potassium channel subunit that does not form functional channels by itself. The chain is Voltage-gated potassium channel regulatory subunit KCNG1 from Homo sapiens (Human).